The following is a 247-amino-acid chain: uncharacterized protein (247 aa).

The signal sequence occupies residues 1-35 (MWGPGVTAEGLSVAPAPPPLLPLLLLLALALVAPS). N-linked (GlcNAc...) asparagine glycosylation is present at Asn57. The chain crosses the membrane as a helical span at residues 82 to 102 (LSGLLILLVLFAIGYFLQRII). A disordered region spans residues 109 to 179 (YPRGQARPGQ…GGRSDPSCAS (71 aa)). Gly residues predominate over residues 160 to 172 (SGGGGRGRGGGGR).

The protein resides in the membrane. This is an uncharacterized protein from Homo sapiens (Human).